The primary structure comprises 418 residues: Gene 68 protein (418 aa).

Disordered stretches follow at residues 230–304 and 353–418; these read IPAP…IHTL and DTFE…ERRA. A compositionally biased stretch (basic and acidic residues) spans 241–250; the sequence is RPSEGGDARP. Residues 257–266 show a composition bias toward basic residues; the sequence is SRARSVHGRR. Basic and acidic residues predominate over residues 353-369; that stretch reads DTFEDNRRDELRHDDSR. The span at 395 to 404 shows a compositional bias: basic residues; the sequence is PHLRRSRGRG.

Belongs to the herpesviridae US2 family.

This chain is Gene 68 protein, found in Equine herpesvirus 1 (strain Ab4p) (EHV-1).